We begin with the raw amino-acid sequence, 224 residues long: BOS complex subunit TMEM147 (224 aa).

The helical transmembrane segment at 1 to 21 (MTLFHFGNCFALAYFPYFITY) threads the bilayer. Over 22–34 (KCSGLSEYNAFWK) the chain is Cytoplasmic. The chain crosses the membrane as a helical span at residues 35-58 (CVQAGVTYLFVQLCKMLFLATFFP). Residues 59 to 66 (TWEGGIYD) lie on the Lumenal side of the membrane. A helical transmembrane segment spans residues 67 to 88 (FIGEFMKASVDVADLIGLNLVM). Over 89–98 (SRNAGKGEYK) the chain is Cytoplasmic. A helical transmembrane segment spans residues 99-124 (IMVAALGWATAELIMSRCIPLWVGAR). Over 125 to 129 (GIEFD) the chain is Lumenal. The chain crosses the membrane as a helical span at residues 130-155 (WKYIQMSIDSNISLVHYIVASAQVWM). Residues 156-164 (ITRYDLYHT) are Cytoplasmic-facing. The helical transmembrane segment at 165–187 (FRPAVLLLMFLSVYKAFVMETFV) threads the bilayer. At 188–194 (HLCSLGS) the chain is on the lumenal side. The helical transmembrane segment at 195-216 (WAALLARAVVTGLLALSTLALY) threads the bilayer. Topologically, residues 217–224 (VAVVNVHS) are cytoplasmic.

This sequence belongs to the TMEM147 family. In terms of assembly, component of the back of Sec61 (BOS) complex, composed of NCLN/Nicalin, NOMO (NOMO1, NOMO2 or NOMO3) and TMEM147. The BOS complex is part of the multi-pass translocon (MPT) complex, composed of three subcomplexes, the GEL complex (composed of RAB5IF/OPTI and TMCO1), the BOS complex (composed of NCLN/Nicalin, NOMO and TMEM147) and the PAT complex (composed of WDR83OS/Asterix and CCDC47). The MPT complex associates with the SEC61 complex. Interacts with CHRM3, CHRM1 and AVPR2. Interacts with LBR; promoting LBR localization to the nucleus inner membrane. Interacts with DHCR7.

It is found in the endoplasmic reticulum membrane. Its subcellular location is the nucleus membrane. The protein localises to the cell membrane. In terms of biological role, component of the multi-pass translocon (MPT) complex that mediates insertion of multi-pass membrane proteins into the lipid bilayer of membranes. The MPT complex takes over after the SEC61 complex: following membrane insertion of the first few transmembrane segments of proteins by the SEC61 complex, the MPT complex occludes the lateral gate of the SEC61 complex to promote insertion of subsequent transmembrane regions. Also acts as a negative regulator of CHRM3 function, most likely by interfering with its trafficking to the cell membrane. Negatively regulates CHRM3-mediated calcium mobilization and activation of RPS6KA1/p90RSK activity. Regulates LBR localization to the nucleus inner membrane. This Homo sapiens (Human) protein is BOS complex subunit TMEM147.